The following is a 122-amino-acid chain: Small ribosomal subunit protein uS12 (122 aa).

Positions 1-45 (MPTTNQLVRKERKRQTKKTATPALQGSPQRRGVCTRVSTTTPKKP) are disordered. Residues 18 to 28 (KTATPALQGSP) show a composition bias toward polar residues. Asp89 is modified (3-methylthioaspartic acid).

This sequence belongs to the universal ribosomal protein uS12 family. Part of the 30S ribosomal subunit. Contacts proteins S8 and S17. May interact with IF1 in the 30S initiation complex.

Its function is as follows. With S4 and S5 plays an important role in translational accuracy. Interacts with and stabilizes bases of the 16S rRNA that are involved in tRNA selection in the A site and with the mRNA backbone. Located at the interface of the 30S and 50S subunits, it traverses the body of the 30S subunit contacting proteins on the other side and probably holding the rRNA structure together. The combined cluster of proteins S8, S12 and S17 appears to hold together the shoulder and platform of the 30S subunit. This Rubrobacter xylanophilus (strain DSM 9941 / JCM 11954 / NBRC 16129 / PRD-1) protein is Small ribosomal subunit protein uS12.